The primary structure comprises 492 residues: Heat shock factor protein 4 (492 aa).

The DNA-binding element occupies 17–122 (VPAFLGKLWA…LLERVRRKVP (106 aa)). A hydrophobic repeat HR-A/B region spans residues 129-203 (SRWRPEDLSR…GPLQTGPSST (75 aa)). Residues 245–322 (LPETTLGLSP…ECDFCVTAPP (78 aa)) are interactions with DUSP26, MAPK1 and MAPK2. Positions 263 to 282 (SDIPEDSPSPEGHRLSPSGG) are disordered. Lys-293 participates in a covalent cross-link: Glycyl lysine isopeptide (Lys-Gly) (interchain with G-Cter in SUMO). Position 298 is a phosphoserine (Ser-298). Residues 337–378 (GSYSPEGPRSVQQPEPRGPREVPDRGTLGLDRGNRSPESLLP) form a disordered region. The segment at 364 to 389 (LGLDRGNRSPESLLPPMLLRPAPETL) is hydrophobic repeat HR-C.

This sequence belongs to the HSF family. In terms of assembly, homotrimer. Exhibits constitutive DNA binding and forms trimers even in the absence of stress. Interacts with ALKBH4, DUSP26, MAPK1, MAPK2, MAPK8 and MAP kinase p38. Post-translationally, phosphorylated mainly on serine residues. Phosphorylation on Ser-298 promotes sumoylation on Lys-293. Isoform HSF4B is constitutively sumoylated. Sumoylation represses the transcriptional activity and is promoted by phosphorylation on Ser-298. HSFA is not sumoylated. Preferentially expressed in brain and lung. Also found in the eye. Slightly detected in liver and skeletal muscle. Isoform B is the major species in various tissues.

The protein localises to the nucleus. Heat-shock transcription factor that specifically binds heat shock promoter elements (HSE). Required for denucleation and organelle rupture and degradation that occur during eye lens terminal differentiation, when fiber cells that compose the lens degrade all membrane-bound organelles in order to provide lens with transparency to allow the passage of light. In this process, may regulate denucleation of lens fiber cells in part by activating DNASE2B transcription. May be involved in DNA repair through the transcriptional regulation of RAD51. May up-regulate p53/TP53 protein in eye lens fiber cells, possibly through protein stabilization. In the eye lens, controls the expression of alpha-crystallin B chain/CRYAB and consequently may be involved in the regulation of lysosomal acidification. In terms of biological role, transcriptional repressor. Functionally, transcriptional activator. In Mus musculus (Mouse), this protein is Heat shock factor protein 4 (Hsf4).